The sequence spans 498 residues: Ammonium transporter 1 member 3 (498 aa).

Transmembrane regions (helical) follow at residues 41-61, 76-96, 122-142, 150-170, 194-214, 238-258, 277-299, 307-327, 329-349, 362-382, and 414-434; these read LLFS…LCAG, VLDA…FAFG, FFLF…GSIA, YLIY…HWFW, FAGS…GAFI, LVVL…PGSF, AVGR…TLYG, WNVT…TAGC, VVDP…LIGC, LEAT…TALF, and IVQI…LFYV. The segment at 473–498 is disordered; that stretch reads RAKSAAETARVEPRKSPEQAAAGQFV.

This sequence belongs to the ammonia transporter channel (TC 1.A.11.2) family. In terms of tissue distribution, expressed in roots.

The protein resides in the membrane. Functionally, ammonium transporter probably involved in ammonium uptake from the soil. The protein is Ammonium transporter 1 member 3 (AMT1-3) of Oryza sativa subsp. japonica (Rice).